We begin with the raw amino-acid sequence, 85 residues long: UPF0297 protein Clos_1665 (85 aa).

Belongs to the UPF0297 family.

The protein is UPF0297 protein Clos_1665 of Alkaliphilus oremlandii (strain OhILAs) (Clostridium oremlandii (strain OhILAs)).